Here is a 118-residue protein sequence, read N- to C-terminus: Small ribosomal subunit protein uS13 (118 aa).

A disordered region spans residues 92-118 (RRSLPVRGQRTKTNARTRKGPRKPIKK).

This sequence belongs to the universal ribosomal protein uS13 family. As to quaternary structure, part of the 30S ribosomal subunit. Forms a loose heterodimer with protein S19. Forms two bridges to the 50S subunit in the 70S ribosome.

Its function is as follows. Located at the top of the head of the 30S subunit, it contacts several helices of the 16S rRNA. In the 70S ribosome it contacts the 23S rRNA (bridge B1a) and protein L5 of the 50S subunit (bridge B1b), connecting the 2 subunits; these bridges are implicated in subunit movement. Contacts the tRNAs in the A and P-sites. This Acinetobacter baumannii (strain AB307-0294) protein is Small ribosomal subunit protein uS13.